A 578-amino-acid chain; its full sequence is Protein O-linked-mannose beta-1,4-N-acetylglucosaminyltransferase 2 (578 aa).

At 1–4 (MNIS) the chain is on the cytoplasmic side. The chain crosses the membrane as a helical; Signal-anchor for type II membrane protein span at residues 5 to 25 (AVFSALLVSIMAAVLWKHVKL). Residues 26-578 (LDQFYVIEEE…PFAEVLVCST (553 aa)) are Lumenal-facing. Residues Asn98, Asn275, Asn335, Asn451, Asn541, and Asn563 are each glycosylated (N-linked (GlcNAc...) asparagine). The region spanning 484-578 (RESKCQASAQ…PFAEVLVCST (95 aa)) is the Fibronectin type-III domain.

It belongs to the glycosyltransferase 61 family.

It is found in the endoplasmic reticulum membrane. It carries out the reaction 3-O-(alpha-D-mannosyl)-L-threonyl-[protein] + UDP-N-acetyl-alpha-D-glucosamine = 3-O-(N-acetyl-beta-D-glucosaminyl-(1-&gt;4)-alpha-D-mannosyl)-L-threonyl-[protein] + UDP + H(+). Its pathway is protein modification; protein glycosylation. In terms of biological role, O-linked mannose beta-1,4-N-acetylglucosaminyltransferase that transfers UDP-N-acetyl-D-glucosamine to the 4-position of the mannose to generate N-acetyl-D-glucosamine-beta-1,4-O-D-mannosylprotein. Involved in the biosynthesis of the phosphorylated O-mannosyl trisaccharide (N-acetylgalactosamine-beta-3-N-acetylglucosamine-beta-4-(phosphate-6-)mannose), a carbohydrate structure present in alpha-dystroglycan (DAG1), which is required for binding laminin G-like domain-containing extracellular proteins with high affinity. The chain is Protein O-linked-mannose beta-1,4-N-acetylglucosaminyltransferase 2 (pomgnt2) from Xenopus laevis (African clawed frog).